The primary structure comprises 426 residues: Riboflavin biosynthesis protein PYRD, chloroplastic (426 aa).

A chloroplast-targeting transit peptide spans 1–61 (MQISCLPISI…SQTGFSNPVL (61 aa)). In terms of domain architecture, CMP/dCMP-type deaminase spans 72 to 194 (VDDSFYMRKC…RLKDAGIDVT (123 aa)). His121 contacts Zn(2+). Catalysis depends on Glu123, which acts as the Proton donor. Residues Cys146 and Cys155 each coordinate Zn(2+).

It depends on Zn(2+) as a cofactor.

The protein resides in the plastid. It is found in the chloroplast. It carries out the reaction 2,5-diamino-6-hydroxy-4-(5-phosphoribosylamino)-pyrimidine + H2O + H(+) = 5-amino-6-(5-phospho-D-ribosylamino)uracil + NH4(+). Its pathway is cofactor biosynthesis; riboflavin biosynthesis; 5-amino-6-(D-ribitylamino)uracil from GTP: step 2/4. Monofunctional pyrimidine deaminase involved in the riboflavin biosynthesis pathway. Also has a reductase domain that lacks catalytically essential substrate-binding residues. The protein is Riboflavin biosynthesis protein PYRD, chloroplastic (PYRD) of Arabidopsis thaliana (Mouse-ear cress).